The primary structure comprises 801 residues: Cadherin-20 (801 aa).

A signal peptide spans 1-34 (MWTSGRMSNAKNWLGLGMSLYFWGLMDLTTTVLS). The propeptide occupies 35–59 (DTPTPQGELEALLSDKPQSHQRTKR). Topologically, residues 60 to 619 (SWVWNQFFVL…AYMLPVSLSR (560 aa)) are extracellular. 5 consecutive Cadherin domains span residues 61–165 (WVWN…EPKF), 166–274 (LDGP…PPRF), 275–389 (PQKH…PPVF), 390–494 (EPGF…APEF), and 494–610 (FPRF…SPEA). Residue asparagine 261 is glycosylated (N-linked (GlcNAc...) asparagine). Asparagine 420, asparagine 461, and asparagine 542 each carry an N-linked (GlcNAc...) asparagine glycan. A helical transmembrane segment spans residues 620-640 (GALIAILACIFVLLVLVLLIL). The Cytoplasmic portion of the chain corresponds to 641 to 801 (SMRRHRKQPY…GASEGPAPLW (161 aa)).

Expressed in placenta, adult brain, and fetal brain.

The protein localises to the cell membrane. In terms of biological role, cadherins are calcium-dependent cell adhesion proteins. They preferentially interact with themselves in a homophilic manner in connecting cells; cadherins may thus contribute to the sorting of heterogeneous cell types. In Homo sapiens (Human), this protein is Cadherin-20 (CDH20).